We begin with the raw amino-acid sequence, 162 residues long: 2-C-methyl-D-erythritol 2,4-cyclodiphosphate synthase (162 aa).

Residues Asp-12 and His-14 each contribute to the a divalent metal cation site. Residues 12 to 14 and 38 to 39 each bind 4-CDP-2-C-methyl-D-erythritol 2-phosphate; these read DVH and HS. Position 46 (His-46) interacts with a divalent metal cation. Residues 60–62, 65–69, Phe-143, and Arg-146 each bind 4-CDP-2-C-methyl-D-erythritol 2-phosphate; these read DIG and FPDTD.

It belongs to the IspF family. As to quaternary structure, homotrimer. A divalent metal cation serves as cofactor.

The catalysed reaction is 4-CDP-2-C-methyl-D-erythritol 2-phosphate = 2-C-methyl-D-erythritol 2,4-cyclic diphosphate + CMP. It functions in the pathway isoprenoid biosynthesis; isopentenyl diphosphate biosynthesis via DXP pathway; isopentenyl diphosphate from 1-deoxy-D-xylulose 5-phosphate: step 4/6. Functionally, involved in the biosynthesis of isopentenyl diphosphate (IPP) and dimethylallyl diphosphate (DMAPP), two major building blocks of isoprenoid compounds. Catalyzes the conversion of 4-diphosphocytidyl-2-C-methyl-D-erythritol 2-phosphate (CDP-ME2P) to 2-C-methyl-D-erythritol 2,4-cyclodiphosphate (ME-CPP) with a corresponding release of cytidine 5-monophosphate (CMP). The sequence is that of 2-C-methyl-D-erythritol 2,4-cyclodiphosphate synthase from Azoarcus sp. (strain BH72).